A 415-amino-acid polypeptide reads, in one-letter code: Serine hydroxymethyltransferase 1 (415 aa).

(6S)-5,6,7,8-tetrahydrofolate is bound by residues Leu-117 and 121–123 (GHL). Position 225 is an N6-(pyridoxal phosphate)lysine (Lys-225). 349-351 (SPF) serves as a coordination point for (6S)-5,6,7,8-tetrahydrofolate.

Belongs to the SHMT family. In terms of assembly, homodimer. The cofactor is pyridoxal 5'-phosphate.

The protein resides in the cytoplasm. It catalyses the reaction (6R)-5,10-methylene-5,6,7,8-tetrahydrofolate + glycine + H2O = (6S)-5,6,7,8-tetrahydrofolate + L-serine. It participates in one-carbon metabolism; tetrahydrofolate interconversion. Its pathway is amino-acid biosynthesis; glycine biosynthesis; glycine from L-serine: step 1/1. Its function is as follows. Catalyzes the reversible interconversion of serine and glycine with tetrahydrofolate (THF) serving as the one-carbon carrier. This reaction serves as the major source of one-carbon groups required for the biosynthesis of purines, thymidylate, methionine, and other important biomolecules. Also exhibits THF-independent aldolase activity toward beta-hydroxyamino acids, producing glycine and aldehydes, via a retro-aldol mechanism. In Sulfurimonas denitrificans (strain ATCC 33889 / DSM 1251) (Thiomicrospira denitrificans (strain ATCC 33889 / DSM 1251)), this protein is Serine hydroxymethyltransferase 1.